A 121-amino-acid polypeptide reads, in one-letter code: Spindle and kinetochore-associated protein 2 (121 aa).

Residue serine 101 is modified to Phosphoserine.

This sequence belongs to the SKA2 family. In terms of assembly, component of the SKA1 complex, composed of SKA1, SKA2 and SKA3. Forms a heterodimer with SKA1; the heterodimer interacting with SKA3. The core SKA1 complex is composed of 2 SKA1-SKA2 heterodimers, each heterodimer interacting with a molecule of the SKA3 homodimer. The core SKA1 complex associates with microtubules and forms oligomeric assemblies. Interacts directly with SKA1. Binds directly to microtubules; but with a much lower affinity than SKA1. May interact with NR3C1; the relevance of such interaction remains unclear in vivo.

The protein localises to the cytoplasm. It is found in the cytoskeleton. Its subcellular location is the spindle. It localises to the chromosome. The protein resides in the centromere. The protein localises to the kinetochore. Its function is as follows. Component of the SKA1 complex, a microtubule-binding subcomplex of the outer kinetochore that is essential for proper chromosome segregation. Required for timely anaphase onset during mitosis, when chromosomes undergo bipolar attachment on spindle microtubules leading to silencing of the spindle checkpoint. The SKA1 complex is a direct component of the kinetochore-microtubule interface and directly associates with microtubules as oligomeric assemblies. The complex facilitates the processive movement of microspheres along a microtubule in a depolymerization-coupled manner. In the complex, it is required for SKA1 localization. Affinity for microtubules is synergistically enhanced in the presence of the ndc-80 complex and may allow the ndc-80 complex to track depolymerizing microtubules. The protein is Spindle and kinetochore-associated protein 2 (SKA2) of Homo sapiens (Human).